A 189-amino-acid polypeptide reads, in one-letter code: Protein Rex (189 aa).

A compositionally biased stretch (basic residues) spans 1–16 (MPKTRRGPRRSQRKRP). Residues 1 to 26 (MPKTRRGPRRSQRKRPPTPWPTSQGL) are disordered. Positions 2–18 (PKTRRGPRRSQRKRPPT) match the Nuclear localization signal, and RNA-binding (RxRE) motif. Residues 56–70 (RPAYIVTPYWPPVQS) are homomultimerization. At Ser-70 the chain carries Phosphoserine; by host. The short motif at 82 to 93 (LSAQLYSSLSLG) is the Nuclear export signal element. The segment at 87-189 (YSSLSLGSPP…PPSPGPSCPR (103 aa)) is disordered. The segment covering 115–125 (IQPPTFHPPSS) has biased composition (pro residues). Residues 123-131 (PSSRPYANT) are homomultimerization. Thr-174 is modified (phosphothreonine; by host). Ser-177 carries the phosphoserine; by host modification. Residues 178-189 (FPPPSPGPSCPR) show a composition bias toward pro residues.

Belongs to the deltaretrovirus Rex protein family. Homomultimer. Multimeric assembly is essential for activity and involves XPO1. Binds to human XPO1 and KPNB1. Interacts (via N-terminal nuclear localization signal) with human NPM1. Post-translationally, phosphorylated.

It is found in the host nucleus. Its subcellular location is the host nucleolus. It localises to the host cytoplasm. Functionally, rex escorts unspliced gag-pro-pol and singly spliced env mRNAs out of the nucleus of infected cells. These mRNAs carry a recognition sequence called Rex responsive element (RxRE or XRE) located at the 3' region of the long terminal repeat (LTR). This function is essential since most HTLV proteins are translated from unspliced or partially spliced pre-mRNAs that cannot exit the nucleus by the pathway used by fully processed cellular mRNAs. Rex itself is translated from a fully spliced mRNA that probably readily exits the nucleus. Rex's nuclear localization signal (NLS) binds directly to KPNB1/importin beta-1 without previous binding to KPNA1/importin alpha-1. KPNB1 binds to the GDP bound form of RAN (Ran-GDP) and targets Rex to the nucleus. In the nucleus, the conversion from Ran-GDP to Ran-GTP dissociates Rex from KPNB1 and allows Rex's binding to the RRE in viral pre-mRNAs. Rex multimerizes on the RRE via cooperative assembly. This multimerization is critical for its full biological activity, since it may shield the viral RNA from being spliced or down-regulated, and probably exposes Rex's nuclear export signal (NES) to the surface. Rex can then form a complex with XPO1/CRM1, RANBP3 and Ran-GTP, leading to nuclear export of the complex. Conversion from Ran-GTP to Ran-GDP mediates dissociation of the Rex/RRE/XPO1/RANBP3/RAN complex, so that Rex can return to the nucleus for a subsequent round of export. The chain is Protein Rex from Homo sapiens (Human).